A 364-amino-acid polypeptide reads, in one-letter code: UDP-N-acetylglucosamine--N-acetylmuramyl-(pentapeptide) pyrophosphoryl-undecaprenol N-acetylglucosamine transferase (364 aa).

UDP-N-acetyl-alpha-D-glucosamine-binding positions include Thr10 to Gly12, Asn126, Arg167, Ser199, Ile253, and Gln298.

Belongs to the glycosyltransferase 28 family. MurG subfamily.

It is found in the cell inner membrane. It catalyses the reaction di-trans,octa-cis-undecaprenyl diphospho-N-acetyl-alpha-D-muramoyl-L-alanyl-D-glutamyl-meso-2,6-diaminopimeloyl-D-alanyl-D-alanine + UDP-N-acetyl-alpha-D-glucosamine = di-trans,octa-cis-undecaprenyl diphospho-[N-acetyl-alpha-D-glucosaminyl-(1-&gt;4)]-N-acetyl-alpha-D-muramoyl-L-alanyl-D-glutamyl-meso-2,6-diaminopimeloyl-D-alanyl-D-alanine + UDP + H(+). It participates in cell wall biogenesis; peptidoglycan biosynthesis. Its function is as follows. Cell wall formation. Catalyzes the transfer of a GlcNAc subunit on undecaprenyl-pyrophosphoryl-MurNAc-pentapeptide (lipid intermediate I) to form undecaprenyl-pyrophosphoryl-MurNAc-(pentapeptide)GlcNAc (lipid intermediate II). The sequence is that of UDP-N-acetylglucosamine--N-acetylmuramyl-(pentapeptide) pyrophosphoryl-undecaprenol N-acetylglucosamine transferase from Amoebophilus asiaticus (strain 5a2).